Reading from the N-terminus, the 688-residue chain is Lipase (688 aa).

Positions Met1 to Ala35 are cleaved as a signal peptide. A disordered region spans residues Gly31 to Asn309. A propeptide spans Ala36–Ala302 (removed in mature form). Residues Val45 to Gly54 show a composition bias toward polar residues. 2 stretches are compositionally biased toward basic and acidic residues: residues Glu84–Asp95 and Ser103–Ser143. 2 stretches are compositionally biased toward polar residues: residues Glu144–Glu175 and Lys184–Glu211. The segment covering Lys227 to His268 has biased composition (basic and acidic residues). Positions Leu274 to Gln289 are enriched in polar residues. The active-site Nucleophile is Ser418. Asp609 acts as the Charge relay system in catalysis. Asp647 contacts Ca(2+). The active-site Charge relay system is His648. Positions 650, 655, and 658 each coordinate Ca(2+).

This sequence belongs to the AB hydrolase superfamily. Lipase family.

Its subcellular location is the secreted. The catalysed reaction is a triacylglycerol + H2O = a diacylglycerol + a fatty acid + H(+). This is Lipase (lip) from Staphylococcus epidermidis (strain ATCC 35984 / DSM 28319 / BCRC 17069 / CCUG 31568 / BM 3577 / RP62A).